We begin with the raw amino-acid sequence, 274 residues long: 4-deoxy-L-threo-5-hexosulose-uronate ketol-isomerase (274 aa).

Zn(2+) contacts are provided by His192, His194, Glu199, and His241.

This sequence belongs to the KduI family. Requires Zn(2+) as cofactor.

It carries out the reaction 5-dehydro-4-deoxy-D-glucuronate = 3-deoxy-D-glycero-2,5-hexodiulosonate. The protein operates within glycan metabolism; pectin degradation; 2-dehydro-3-deoxy-D-gluconate from pectin: step 4/5. Its function is as follows. Catalyzes the isomerization of 5-dehydro-4-deoxy-D-glucuronate to 3-deoxy-D-glycero-2,5-hexodiulosonate. The sequence is that of 4-deoxy-L-threo-5-hexosulose-uronate ketol-isomerase from Cereibacter sphaeroides (strain ATCC 17029 / ATH 2.4.9) (Rhodobacter sphaeroides).